Reading from the N-terminus, the 393-residue chain is Staphopain B (393 aa).

Positions 1–36 are cleaved as a signal peptide; that stretch reads MNSSYKSRVFNIISIIMVSMLILSLGAFANNNKAKA. Residues 37–219 constitute a propeptide that is removed on maturation; that stretch reads DSHSKQLEIN…KVEENEAIQE (183 aa). Catalysis depends on residues Cys-243, His-340, and Asn-360.

Belongs to the peptidase C47 family. As to quaternary structure, in the cytoplasm, prematurely activated/folded SspB forms a stable non-covalent complex with SspC. Post-translationally, proteolytically cleaved by staphylococcal serine protease (SspA).

It localises to the secreted. Prematurely activated/folded staphopain B is inhibited by staphostatin B (SspC), which is probably required to protect staphylococcal cytoplasmic proteins from degradation by SspB. Cysteine protease that plays an important role in the inhibition of host innate immune response. Degrades host elastin, fibrogen, fibronectin and kininogen. Blocks phagocytosis of opsonised S.aureus by neutrophils and monocytes by inducing their death in a proteolytic activity-dependent manner. Decreases surface expression of the 'don't eat me' signal CD31 on neutrophils. Cleaves host galectin-3/LGALS3, thereby inhibiting the neutrophil-activating ability of the lectin. The sequence is that of Staphopain B (sspB) from Staphylococcus aureus (strain MSSA476).